The primary structure comprises 432 residues: Serine--tRNA ligase (432 aa).

238-240 (TAE) provides a ligand contact to L-serine. 269–271 (RSE) is an ATP binding site. Residue Glu292 participates in L-serine binding. 357-360 (EISS) is an ATP binding site. Ser393 serves as a coordination point for L-serine.

This sequence belongs to the class-II aminoacyl-tRNA synthetase family. Type-1 seryl-tRNA synthetase subfamily. In terms of assembly, homodimer. The tRNA molecule binds across the dimer.

It localises to the cytoplasm. The catalysed reaction is tRNA(Ser) + L-serine + ATP = L-seryl-tRNA(Ser) + AMP + diphosphate + H(+). It carries out the reaction tRNA(Sec) + L-serine + ATP = L-seryl-tRNA(Sec) + AMP + diphosphate + H(+). The protein operates within aminoacyl-tRNA biosynthesis; selenocysteinyl-tRNA(Sec) biosynthesis; L-seryl-tRNA(Sec) from L-serine and tRNA(Sec): step 1/1. Functionally, catalyzes the attachment of serine to tRNA(Ser). Is also able to aminoacylate tRNA(Sec) with serine, to form the misacylated tRNA L-seryl-tRNA(Sec), which will be further converted into selenocysteinyl-tRNA(Sec). This Hyphomonas neptunium (strain ATCC 15444) protein is Serine--tRNA ligase.